A 271-amino-acid chain; its full sequence is MKKMILIAGPCVIESKDLIFKVAEQLKNFNENPNIEFYFKSSFDKANRTSINSFRGPGLEEGLKILQSVKDEFGMKILTDIHESNQAAAVSEVADVLQIPAFLCRQTDLLVAAAKTKAKVNIKKGQFLNPSDIKYSVKKVLQTRGIEDEGYEAAQKNGVFVAERGASFGYGNLVVDMRSLVIMREFAPVIFDATHSVQMPGAAGGSSGGKSEFVEPLARAAAAVGIDGFFFETHINPCEALCDGPNMLNLTRLKNCVNTLLEIQNIIKENK.

Belongs to the KdsA family.

It localises to the cytoplasm. It carries out the reaction D-arabinose 5-phosphate + phosphoenolpyruvate + H2O = 3-deoxy-alpha-D-manno-2-octulosonate-8-phosphate + phosphate. Its pathway is carbohydrate biosynthesis; 3-deoxy-D-manno-octulosonate biosynthesis; 3-deoxy-D-manno-octulosonate from D-ribulose 5-phosphate: step 2/3. It functions in the pathway bacterial outer membrane biogenesis; lipopolysaccharide biosynthesis. This Campylobacter jejuni subsp. jejuni serotype O:6 (strain 81116 / NCTC 11828) protein is 2-dehydro-3-deoxyphosphooctonate aldolase.